The chain runs to 276 residues: Large ribosomal subunit protein uL2 (276 aa).

Disordered stretches follow at residues 30–57 (EKSL…QGGG) and 219–276 (TVRG…RSKK).

Belongs to the universal ribosomal protein uL2 family. As to quaternary structure, part of the 50S ribosomal subunit. Forms a bridge to the 30S subunit in the 70S ribosome.

One of the primary rRNA binding proteins. Required for association of the 30S and 50S subunits to form the 70S ribosome, for tRNA binding and peptide bond formation. It has been suggested to have peptidyltransferase activity; this is somewhat controversial. Makes several contacts with the 16S rRNA in the 70S ribosome. This Exiguobacterium sibiricum (strain DSM 17290 / CCUG 55495 / CIP 109462 / JCM 13490 / 255-15) protein is Large ribosomal subunit protein uL2.